The sequence spans 645 residues: Threonine--tRNA ligase (645 aa).

A TGS domain is found at 1–61; that stretch reads MIKITLPDGS…TSDSTVQLLT (61 aa). The catalytic stretch occupies residues 242–541; it reads DHRKLGKELE…LIEHVAGNFP (300 aa). Zn(2+)-binding residues include Cys337, His388, and His518.

Belongs to the class-II aminoacyl-tRNA synthetase family. Homodimer. Zn(2+) serves as cofactor.

The protein localises to the cytoplasm. The enzyme catalyses tRNA(Thr) + L-threonine + ATP = L-threonyl-tRNA(Thr) + AMP + diphosphate + H(+). Functionally, catalyzes the attachment of threonine to tRNA(Thr) in a two-step reaction: L-threonine is first activated by ATP to form Thr-AMP and then transferred to the acceptor end of tRNA(Thr). Also edits incorrectly charged L-seryl-tRNA(Thr). This is Threonine--tRNA ligase from Cytophaga hutchinsonii (strain ATCC 33406 / DSM 1761 / CIP 103989 / NBRC 15051 / NCIMB 9469 / D465).